Here is a 252-residue protein sequence, read N- to C-terminus: Hydroxyacylglutathione hydrolase (252 aa).

Positions 54, 56, 58, 59, 111, 130, and 170 each coordinate Zn(2+).

Belongs to the metallo-beta-lactamase superfamily. Glyoxalase II family. In terms of assembly, monomer. Zn(2+) serves as cofactor.

The enzyme catalyses an S-(2-hydroxyacyl)glutathione + H2O = a 2-hydroxy carboxylate + glutathione + H(+). Its pathway is secondary metabolite metabolism; methylglyoxal degradation; (R)-lactate from methylglyoxal: step 2/2. Its function is as follows. Thiolesterase that catalyzes the hydrolysis of S-D-lactoyl-glutathione to form glutathione and D-lactic acid. This is Hydroxyacylglutathione hydrolase from Francisella philomiragia subsp. philomiragia (strain ATCC 25017 / CCUG 19701 / FSC 153 / O#319-036).